A 367-amino-acid polypeptide reads, in one-letter code: 3-ketodihydrosphingosine reductase ksrA (367 aa).

The chain crosses the membrane as a helical span at residues 12-32 (ASPATLGISLILCGFIVYSVS). NADPH-binding residues include G53, S55, G57, R78, K82, D108, and L109. The GXSXG motif lies at 53–57 (GGSDG). A helical transmembrane segment spans residues 193-213 (LIFTCSTLAFVSIAGYAPYSP). The active-site Proton acceptor is the Y211. NADP(+) contacts are provided by Y211, K215, and I259. K215 (lowers pKa of active site Tyr) is an active-site residue.

This sequence belongs to the short-chain dehydrogenases/reductases (SDR) family.

The protein localises to the endoplasmic reticulum membrane. The enzyme catalyses sphinganine + NADP(+) = 3-oxosphinganine + NADPH + H(+). It functions in the pathway lipid metabolism; sphingolipid metabolism. Catalyzes the reduction of 3'-oxosphinganine (3-ketodihydrosphingosine/KDS) to sphinganine (dihydrosphingosine/DHS), the second step of de novo sphingolipid biosynthesis. The protein is 3-ketodihydrosphingosine reductase ksrA of Aspergillus fumigatus (strain ATCC MYA-4609 / CBS 101355 / FGSC A1100 / Af293) (Neosartorya fumigata).